Here is a 132-residue protein sequence, read N- to C-terminus: Myelin P2 protein (132 aa).

An N-acetylserine modification is found at S2. R107 serves as a coordination point for (9Z)-octadecenoate. R107 is a hexadecanoate binding site. A disulfide bridge connects residues C118 and C125. 127–129 (RIY) serves as a coordination point for (9Z)-octadecenoate. 127–129 (RIY) contacts hexadecanoate.

The protein belongs to the calycin superfamily. Fatty-acid binding protein (FABP) family. As to quaternary structure, monomer.

It localises to the cytoplasm. In terms of biological role, may play a role in lipid transport protein in Schwann cells. May bind cholesterol. This Sus scrofa (Pig) protein is Myelin P2 protein.